Consider the following 68-residue polypeptide: Metallothionein-3 (68 aa).

N-acetylmethionine is present on methionine 1. Positions 1–30 (MDPETCPCPSGGSCTCADSCKCEGCKCTSC) are beta. 9 residues coordinate a divalent metal cation: cysteine 6, cysteine 8, cysteine 14, cysteine 16, cysteine 20, cysteine 22, cysteine 25, cysteine 27, and cysteine 30. Residues 31–68 (KKSCCSCCPAECEKCAKDCVCKGGEAAEAEAEKCSCCQ) form an alpha region. Phosphoserine is present on serine 33. Residues cysteine 34, cysteine 35, cysteine 37, cysteine 38, cysteine 42, cysteine 45, cysteine 49, cysteine 51, cysteine 64, cysteine 66, and cysteine 67 each contribute to the a divalent metal cation site.

Belongs to the metallothionein superfamily. Type 1 family. In terms of tissue distribution, abundant in a subset of astrocytes in the normal human brain, but greatly reduced in the Alzheimer disease (AD) brain.

Functionally, binds heavy metals. Contains three zinc and three copper atoms per polypeptide chain and only a negligible amount of cadmium. Inhibits survival and neurite formation of cortical neurons in vitro. This Homo sapiens (Human) protein is Metallothionein-3 (MT3).